The sequence spans 235 residues: Lipoprotein-releasing system ATP-binding protein LolD (235 aa).

One can recognise an ABC transporter domain in the interval 5–235 (FALANIYKSF…SIDESGFNKI (231 aa)). 40-47 (GKSGSGKS) contributes to the ATP binding site.

The protein belongs to the ABC transporter superfamily. Lipoprotein translocase (TC 3.A.1.125) family. As to quaternary structure, the complex is composed of two ATP-binding proteins (LolD) and two transmembrane proteins (LolC and LolE).

It localises to the cell inner membrane. In terms of biological role, part of the ABC transporter complex LolCDE involved in the translocation of mature outer membrane-directed lipoproteins, from the inner membrane to the periplasmic chaperone, LolA. Responsible for the formation of the LolA-lipoprotein complex in an ATP-dependent manner. This chain is Lipoprotein-releasing system ATP-binding protein LolD, found in Ehrlichia chaffeensis (strain ATCC CRL-10679 / Arkansas).